We begin with the raw amino-acid sequence, 748 residues long: Meprin A subunit alpha (748 aa).

The signal sequence occupies residues 1–20; that stretch reads MLWTLPVCLLSLSFSAHIAA. Residues 21–66 constitute a propeptide that is removed on maturation; sequence VSIQHLSTGHDHDDVDVGEQQKDISEINSAAGLNLFQGDILLPRTR. One can recognise a Peptidase M12A domain in the interval 67–261; sequence NALRDPSSRW…TRLNRMYNCT (195 aa). Over 67–719 the chain is Extracellular; the sequence is NALRDPSSRW…RCQAMHVHGS (653 aa). Disulfide bonds link Cys-108–Cys-260, Cys-129–Cys-148, and Cys-270–Cys-432. A glycan (N-linked (GlcNAc...) asparagine) is linked at Asn-141. His-156 contacts Zn(2+). Glu-157 is an active-site residue. Residues His-160 and His-166 each contribute to the Zn(2+) site. Asn-223, Asn-259, Asn-319, Asn-441, and Asn-542 each carry an N-linked (GlcNAc...) asparagine glycan. In terms of domain architecture, MAM spans 265-434; sequence TLLDHCAFEK…ITLTETPCPT (170 aa). Positions 435–596 constitute an MATH domain; sequence GVWTIRNISQ…DDTLIIFVDF (162 aa). The interval 641-668 is disordered; the sequence is LPRRLDQRQPSRPKRSVENTGPMEDHNW. Residues 672–712 form the EGF-like domain; sequence FRDPCDPNPCQNEGTCVNVKGMASCRCVSGHAFFYTGERCQ. Disulfide bonds link Cys-676/Cys-687, Cys-681/Cys-696, and Cys-698/Cys-711. A helical transmembrane segment spans residues 720-739; that stretch reads LLGLLIGCITALIFLTFITF. The Cytoplasmic portion of the chain corresponds to 740–748; it reads SNTYQKLRQ.

Homotetramer consisting of disulfide-linked alpha subunits, homooligomer consisting of disulfide-linked alpha subunit homodimers, or heterotetramer of two alpha and two beta subunits formed by non-covalent association of two disulfide-linked heterodimers. Interacts with MBL2 through its carbohydrate moiety. This interaction may inhibit its catalytic activity. Requires Zn(2+) as cofactor. Post-translationally, N-glycosylated; contains GlcNAc, galactose, mannose and a small amount of fucose. In terms of tissue distribution, colocalized with E-24.11 in proximal tubules of juxtamedullary nephrons.

It localises to the membrane. It carries out the reaction Hydrolysis of protein and peptide substrates preferentially on carboxyl side of hydrophobic residues.. With respect to regulation, inhibited by actinonin. The sequence is that of Meprin A subunit alpha (Mep1a) from Rattus norvegicus (Rat).